Reading from the N-terminus, the 338-residue chain is Tagatose 1,6-diphosphate aldolase (338 aa).

It belongs to the aldolase LacD family.

It carries out the reaction D-tagatofuranose 1,6-bisphosphate = D-glyceraldehyde 3-phosphate + dihydroxyacetone phosphate. The protein operates within carbohydrate metabolism; D-tagatose 6-phosphate degradation; D-glyceraldehyde 3-phosphate and glycerone phosphate from D-tagatose 6-phosphate: step 2/2. In Listeria monocytogenes serotype 4a (strain HCC23), this protein is Tagatose 1,6-diphosphate aldolase.